The following is a 98-amino-acid chain: Co-chaperonin GroES (98 aa).

It belongs to the GroES chaperonin family. In terms of assembly, heptamer of 7 subunits arranged in a ring. Interacts with the chaperonin GroEL.

The protein localises to the cytoplasm. Functionally, together with the chaperonin GroEL, plays an essential role in assisting protein folding. The GroEL-GroES system forms a nano-cage that allows encapsulation of the non-native substrate proteins and provides a physical environment optimized to promote and accelerate protein folding. GroES binds to the apical surface of the GroEL ring, thereby capping the opening of the GroEL channel. The protein is Co-chaperonin GroES of Paenarthrobacter aurescens (strain TC1).